A 364-amino-acid chain; its full sequence is Spermidine/putrescine import ATP-binding protein PotA (364 aa).

One can recognise an ABC transporter domain in the interval 5–235 (LSFKSVSKQY…PVNRFVADFI (231 aa)). 37–44 (GPSGCGKT) provides a ligand contact to ATP.

The protein belongs to the ABC transporter superfamily. Spermidine/putrescine importer (TC 3.A.1.11.1) family. As to quaternary structure, the complex is composed of two ATP-binding proteins (PotA), two transmembrane proteins (PotB and PotC) and a solute-binding protein (PotD).

The protein resides in the cell membrane. It catalyses the reaction ATP + H2O + polyamine-[polyamine-binding protein]Side 1 = ADP + phosphate + polyamineSide 2 + [polyamine-binding protein]Side 1.. Functionally, part of the ABC transporter complex PotABCD involved in spermidine/putrescine import. Responsible for energy coupling to the transport system. This is Spermidine/putrescine import ATP-binding protein PotA from Staphylococcus saprophyticus subsp. saprophyticus (strain ATCC 15305 / DSM 20229 / NCIMB 8711 / NCTC 7292 / S-41).